Here is a 205-residue protein sequence, read N- to C-terminus: Protein-L-isoaspartate O-methyltransferase (205 aa).

The active site involves Ser-52.

Belongs to the methyltransferase superfamily. L-isoaspartyl/D-aspartyl protein methyltransferase family.

The protein resides in the cytoplasm. The enzyme catalyses [protein]-L-isoaspartate + S-adenosyl-L-methionine = [protein]-L-isoaspartate alpha-methyl ester + S-adenosyl-L-homocysteine. In terms of biological role, catalyzes the methyl esterification of L-isoaspartyl residues in peptides and proteins that result from spontaneous decomposition of normal L-aspartyl and L-asparaginyl residues. It plays a role in the repair and/or degradation of damaged proteins. The protein is Protein-L-isoaspartate O-methyltransferase of Gloeobacter violaceus (strain ATCC 29082 / PCC 7421).